Consider the following 209-residue polypeptide: uncharacterized protein (209 aa).

3 helical membrane-spanning segments follow: residues 26–48, 147–169, and 179–196; these read LRYF…GLAV, AYLV…PFLM, and IVAA…VYLL.

Its subcellular location is the cell membrane. This is an uncharacterized protein from Archaeoglobus fulgidus (strain ATCC 49558 / DSM 4304 / JCM 9628 / NBRC 100126 / VC-16).